Here is a 369-residue protein sequence, read N- to C-terminus: Chaperone protein DnaJ (369 aa).

One can recognise a J domain in the interval 7 to 73; that stretch reads DYYEILGVPR…QKRAMYDRFG (67 aa). A CR-type zinc finger spans residues 143–225; it reads GAEIPVEYER…CGGSGRVLRK (83 aa). Zn(2+)-binding residues include Cys-156, Cys-159, Cys-173, Cys-176, Cys-199, Cys-202, Cys-213, and Cys-216. 4 CXXCXGXG motif repeats span residues 156–163, 173–180, 199–206, and 213–220; these read CPRCGGTG, CPSCGGTG, CERCGGTG, and CHECGGSG.

Belongs to the DnaJ family. In terms of assembly, homodimer. The cofactor is Zn(2+).

It localises to the cytoplasm. Participates actively in the response to hyperosmotic and heat shock by preventing the aggregation of stress-denatured proteins and by disaggregating proteins, also in an autonomous, DnaK-independent fashion. Unfolded proteins bind initially to DnaJ; upon interaction with the DnaJ-bound protein, DnaK hydrolyzes its bound ATP, resulting in the formation of a stable complex. GrpE releases ADP from DnaK; ATP binding to DnaK triggers the release of the substrate protein, thus completing the reaction cycle. Several rounds of ATP-dependent interactions between DnaJ, DnaK and GrpE are required for fully efficient folding. Also involved, together with DnaK and GrpE, in the DNA replication of plasmids through activation of initiation proteins. This is Chaperone protein DnaJ from Thermotoga sp. (strain RQ2).